The primary structure comprises 184 residues: Ribose 1,5-bisphosphate phosphokinase PhnN (184 aa).

ATP is bound at residue 11-18 (GPSGAGKD).

Belongs to the ribose 1,5-bisphosphokinase family.

The catalysed reaction is alpha-D-ribose 1,5-bisphosphate + ATP = 5-phospho-alpha-D-ribose 1-diphosphate + ADP. It functions in the pathway metabolic intermediate biosynthesis; 5-phospho-alpha-D-ribose 1-diphosphate biosynthesis; 5-phospho-alpha-D-ribose 1-diphosphate from D-ribose 5-phosphate (route II): step 3/3. Its function is as follows. Catalyzes the phosphorylation of ribose 1,5-bisphosphate to 5-phospho-D-ribosyl alpha-1-diphosphate (PRPP). In Burkholderia mallei (strain SAVP1), this protein is Ribose 1,5-bisphosphate phosphokinase PhnN.